An 87-amino-acid polypeptide reads, in one-letter code: Small archaeal modifier protein 1 (87 aa).

At Gly87 the chain carries 1-thioglycine; alternate. The residue at position 87 (Gly87) is a Glycyl adenylate; alternate. Gly87 participates in a covalent cross-link: Glycyl lysine isopeptide (Gly-Lys) (interchain with K-? in acceptor proteins); alternate.

The C-terminal glycine is likely acyl-adenylated (-COAMP) by UbaA, and also probably thiocarboxylated (-COSH) to function in sulfur transfer.

Its function is as follows. Functions as a protein modifier covalently attached to lysine residues of substrate proteins, as well as a sulfur carrier in molybdenum cofactor (MoCo) biosynthesis. The protein modification process is termed sampylation and involves the formation of an isopeptide bond between the SAMP1 C-terminal glycine carboxylate and the epsilon-amino group of lysine residues on target proteins. May serve as a proteolytic signal in the cell to target proteins for degradation by proteasomes. The polypeptide is Small archaeal modifier protein 1 (samp1) (Haloferax volcanii (strain ATCC 29605 / DSM 3757 / JCM 8879 / NBRC 14742 / NCIMB 2012 / VKM B-1768 / DS2) (Halobacterium volcanii)).